Reading from the N-terminus, the 1186-residue chain is Tricalbin-1 (1186 aa).

The segment at 1–50 (MAKEDTGVTAPKKPETAQVANINGIDKLEPPKTKEETESSKSVSSEKAAH) is disordered. The Cytoplasmic segment spans residues 1–106 (MAKEDTGVTA…NIIPDSLYGD (106 aa)). Positions 26–39 (DKLEPPKTKEETES) are enriched in basic and acidic residues. A helical membrane pass occupies residues 107 to 127 (WYHSVAIFFIGGVASFALGHY). Residue lysine 128 is a topological domain, extracellular. A helical transmembrane segment spans residues 129–149 (FSMGSAFFVIVITSLLYRTSA). Residues 150–1186 (KKYRGSIREL…HEMGEEETKF (1037 aa)) lie on the Cytoplasmic side of the membrane. An SMP-LTD domain is found at 172–375 (DYESLEWLNA…PPFSLQLNIP (204 aa)). 3 consecutive C2 domains span residues 366–487 (PPFS…RNLK), 512–636 (EKKL…IKIT), and 640–757 (RPVR…DKYE). Residues 795-822 (LEEIQDLDKVNKKKKALELRKSAIDEKK) are a coiled coil. The C2 4 domain occupies 976–1094 (PIDTKQLPAN…KVEGTTELDV (119 aa)). Serine 1000 is modified (phosphoserine). 6 residues coordinate Ca(2+): aspartate 1008, aspartate 1014, aspartate 1064, aspartate 1066, serine 1069, and aspartate 1072.

It belongs to the tricalbin family. As to quaternary structure, interacts with TCB2 via its C-terminal domain. The cofactor is Ca(2+).

The protein resides in the cell membrane. Its subcellular location is the endoplasmic reticulum membrane. May play a role in membrane trafficking. In Saccharomyces cerevisiae (strain ATCC 204508 / S288c) (Baker's yeast), this protein is Tricalbin-1 (TCB1).